A 296-amino-acid chain; its full sequence is Cell division protein DivIB (296 aa).

Topologically, residues 1–25 (MMEDKIIHTPRFDEQRRMRRKKRQR) are cytoplasmic. A helical membrane pass occupies residues 26 to 46 (LQLFIFLSIVAIVSLILIYMF). Topologically, residues 47–296 (TSISYVKKIS…KELNQVKKNS (250 aa)) are extracellular. Residues 50-118 (SYVKKISVND…NTVSINVEEY (69 aa)) enclose the POTRA domain.

This sequence belongs to the FtsQ/DivIB family. DivIB subfamily.

It is found in the cell membrane. Cell division protein that may be involved in stabilizing or promoting the assembly of the division complex. The polypeptide is Cell division protein DivIB (Macrococcus caseolyticus (strain JCSC5402) (Macrococcoides caseolyticum)).